The following is a 267-amino-acid chain: Ribosomal RNA small subunit methyltransferase A (267 aa).

S-adenosyl-L-methionine is bound by residues asparagine 16, leucine 18, glycine 43, glutamate 64, aspartate 89, and asparagine 110.

This sequence belongs to the class I-like SAM-binding methyltransferase superfamily. rRNA adenine N(6)-methyltransferase family. RsmA subfamily.

It is found in the cytoplasm. The enzyme catalyses adenosine(1518)/adenosine(1519) in 16S rRNA + 4 S-adenosyl-L-methionine = N(6)-dimethyladenosine(1518)/N(6)-dimethyladenosine(1519) in 16S rRNA + 4 S-adenosyl-L-homocysteine + 4 H(+). Specifically dimethylates two adjacent adenosines (A1518 and A1519) in the loop of a conserved hairpin near the 3'-end of 16S rRNA in the 30S particle. May play a critical role in biogenesis of 30S subunits. The protein is Ribosomal RNA small subunit methyltransferase A of Pseudomonas putida (strain ATCC 47054 / DSM 6125 / CFBP 8728 / NCIMB 11950 / KT2440).